The chain runs to 246 residues: MAGHSKWANTKHRKAAQDAKRGKIFTKIIRELVTAARLGGGDAGSNPRLRAAIDKALANNMTRDTLNRAIARGVGGDDDANMETIIYEGYGPGGTAVMVECLSDNRNRTVAEVRHAFTKTGGNLGTDGSVAYLFSKKGVISFDAGDEDAIMEAALEAGAEDVVTFDDGAIDVYTAWEEMGAVRDALAAMGLKADNAEVSMIPSTKADMDAETAPKLLRLIDMLEDCDDVQEVYHNGEISDEVAATL.

It belongs to the TACO1 family.

The protein localises to the cytoplasm. The sequence is that of Probable transcriptional regulatory protein Ent638_2432 from Enterobacter sp. (strain 638).